The following is a 320-amino-acid chain: Glucokinase (320 aa).

12–17 contributes to the ATP binding site; it reads GDIGGT.

This sequence belongs to the bacterial glucokinase family.

The protein resides in the cytoplasm. It carries out the reaction D-glucose + ATP = D-glucose 6-phosphate + ADP + H(+). The chain is Glucokinase from Nitrobacter hamburgensis (strain DSM 10229 / NCIMB 13809 / X14).